Consider the following 152-residue polypeptide: MNITRILGVVTTVVILYSVQVTAQFFGDVQQAMRCVAKLMPCQPYIHLSIPPPPLCCNPMKQIAEKDVSCLCTAFKHPDLLRFLALTKENAIKILDSCGINHDPSVCNKTNPSSPAALPEAATSGNSFSTKKNTALAITFFGFSFVFLGMII.

The N-terminal stretch at 1-23 (MNITRILGVVTTVVILYSVQVTA) is a signal peptide. 3 disulfide bridges follow: Cys-42–Cys-56, Cys-57–Cys-98, and Cys-70–Cys-107. N-linked (GlcNAc...) asparagine glycosylation is present at Asn-108. The GPI-anchor amidated serine moiety is linked to residue Ser-124. Positions 125-152 (GNSFSTKKNTALAITFFGFSFVFLGMII) are cleaved as a propeptide — removed in mature form.

It belongs to the plant LTP family.

It localises to the cell membrane. Its function is as follows. Probable lipid transfer protein. The sequence is that of Non-specific lipid transfer protein GPI-anchored 8 from Arabidopsis thaliana (Mouse-ear cress).